Here is a 240-residue protein sequence, read N- to C-terminus: DNA repair protein RecO (240 aa).

The protein belongs to the RecO family.

Functionally, involved in DNA repair and RecF pathway recombination. The sequence is that of DNA repair protein RecO from Actinobacillus pleuropneumoniae serotype 7 (strain AP76).